The sequence spans 818 residues: Protein LDB19 (818 aa).

Residues 1–25 (MAFSRLTSTHQSNHNGYSNSNKKGQ) are disordered. A Phosphothreonine modification is found at Thr-93. Basic and acidic residues predominate over residues 352–361 (QVKIKESEKS). The interval 352-374 (QVKIKESEKSKKPRSHIKRYGEL) is disordered. Ser-384 bears the Phosphoserine mark. A disordered region spans residues 388–436 (MPSQRLPGEPGREQAPNSSGPASTGNVGLDDENPVNEDEEDQPGSEFIH). Positions 402-413 (APNSSGPASTGN) are enriched in polar residues. Acidic residues predominate over residues 416 to 430 (LDDENPVNEDEEDQP). Lys-486 is covalently cross-linked (Glycyl lysine isopeptide (Lys-Gly) (interchain with G-Cter in ubiquitin)). 2 disordered regions span residues 568–590 (QPIR…NVHN) and 607–644 (TPKV…NSNI). A Phosphothreonine modification is found at Thr-619. Polar residues predominate over residues 620–629 (PVNSNKSNHS). Ser-808 is modified (phosphoserine).

It belongs to the LDB19 family.

It localises to the cytoplasm. The protein resides in the golgi apparatus. Its function is as follows. May be involved in protein-linked oligosaccharide phosphorylation since the deletion reduces the negative charge of the cell surface. Involved in the resistance to EDTA, cadmium chloride, cycloheximide, 6-dimethylaminopurine, methyl caffeate, beta-chloro-L-alanine, caffeine and cerulenin. This is Protein LDB19 (LDB19) from Saccharomyces cerevisiae (strain ATCC 204508 / S288c) (Baker's yeast).